The sequence spans 708 residues: Leukotoxin translocation ATP-binding protein LktB (708 aa).

The region spanning M1–V126 is the Peptidase C39 domain. The ABC transmembrane type-1 domain maps to F155 to Q437. 5 consecutive transmembrane segments (helical) span residues L159–V179, L192–L212, A270–Y290, L296–L316, and V389–G409. Positions I469 to Q704 constitute an ABC transporter domain. Position 503 to 510 (G503 to S510) interacts with ATP.

Belongs to the ABC transporter superfamily. Protein-1 exporter (TC 3.A.1.109) family. As to quaternary structure, homodimer.

It localises to the cell inner membrane. It catalyses the reaction ATP + H2O + proteinSide 1 = ADP + phosphate + proteinSide 2.. In terms of biological role, part of the ABC transporter complex LktBD involved in leukotoxin export. Transmembrane domains (TMD) form a pore in the inner membrane and the ATP-binding domain (NBD) is responsible for energy generation. The polypeptide is Leukotoxin translocation ATP-binding protein LktB (lktB) (Mannheimia haemolytica (Pasteurella haemolytica)).